A 182-amino-acid polypeptide reads, in one-letter code: Hypoxanthine/guanine phosphoribosyltransferase (182 aa).

This sequence belongs to the purine/pyrimidine phosphoribosyltransferase family. Archaeal HPRT subfamily. As to quaternary structure, homodimer.

It localises to the cytoplasm. The enzyme catalyses IMP + diphosphate = hypoxanthine + 5-phospho-alpha-D-ribose 1-diphosphate. It catalyses the reaction GMP + diphosphate = guanine + 5-phospho-alpha-D-ribose 1-diphosphate. It participates in purine metabolism; IMP biosynthesis via salvage pathway; IMP from hypoxanthine: step 1/1. Functionally, catalyzes a salvage reaction resulting in the formation of IMP that is energically less costly than de novo synthesis. The sequence is that of Hypoxanthine/guanine phosphoribosyltransferase from Methanospirillum hungatei JF-1 (strain ATCC 27890 / DSM 864 / NBRC 100397 / JF-1).